The following is a 192-amino-acid chain: Fe/S biogenesis protein NfuA (192 aa).

[4Fe-4S] cluster is bound by residues cysteine 149 and cysteine 152.

The protein belongs to the NfuA family. Homodimer. It depends on [4Fe-4S] cluster as a cofactor.

Involved in iron-sulfur cluster biogenesis. Binds a 4Fe-4S cluster, can transfer this cluster to apoproteins, and thereby intervenes in the maturation of Fe/S proteins. Could also act as a scaffold/chaperone for damaged Fe/S proteins. The sequence is that of Fe/S biogenesis protein NfuA from Shewanella baltica (strain OS223).